A 308-amino-acid chain; its full sequence is Putative S-adenosyl-L-methionine-dependent methyltransferase Mmcs_1045 (308 aa).

Residues aspartate 133 and 162-163 (DL) each bind S-adenosyl-L-methionine.

Belongs to the UPF0677 family.

Functionally, exhibits S-adenosyl-L-methionine-dependent methyltransferase activity. The protein is Putative S-adenosyl-L-methionine-dependent methyltransferase Mmcs_1045 of Mycobacterium sp. (strain MCS).